The following is a 168-amino-acid chain: MNSKGQYPTQPTYPVQPPGNPVYPQTLHLPQAPPYTDAPPAYSELYRPSFVHPGAATVPTMSAAFPGASLYLPMAQSVAVGPLGSTIPMAYYPVSPIYPPGSTVLVEGGYDAGARFGAGATAGNIPPPPPGCPPNAAQLAVMQGANVLVTQRKGNFFMGGSDGGYTIW.

Low complexity predominate over residues 1-13 (MNSKGQYPTQPTY). Residues 1–25 (MNSKGQYPTQPTYPVQPPGNPVYPQ) form a disordered region. A PPAY motif is present at residues 39-42 (PPAY). Position 77 is a phosphoserine (Ser77).

As to quaternary structure, interacts with SOX6. Interacts with DAZ1 and DAZL. Interacts with IL17RB. May interact with FAM168B. Interacts with INCA1. Interacts with EIF4G1 and EIF4G2. Interacts (via PPAY motif) with NEDD4 (via WW domains). Interacts with transcription factor TCF4; the interaction results in localization of DAZAP2 to the nucleus. Interacts with transcription factors TCF7 and TCF7L1. Interacts with transcription factor LEF1. Interacts with serine/threonine-protein kinase HIPK2; the interaction results in phosphorylation of DAZAP2 which causes localization of DAZAP2 to the nucleus, reduces interaction of DAZAP2 with HIPK2 and prevents DAZAP2-dependent degradation of HIPK2. Interacts with ubiquitin ligase SIAH1; the interaction is decreased following phosphorylation of DAZAP2 by HIPK2. Interacts with TP53; the interaction is triggered by DNA damage. Ubiquitinated by SMURF2, leading to proteasomal degradation. Ubiquitinated by NEDD4, leading to proteasomal degradation. In terms of processing, following DNA damage, phosphorylated by HIPK2 which promotes DAZAP2 localization to the nucleus, reduces interaction of DAZAP2 with HIPK2 and SIAH1, and prevents DAZAP2-dependent ubiquitination of HIPK2 by E3 ubiquitin-protein ligase SIAH1 and subsequent HIPK2 proteasomal degradation.

It localises to the cytoplasm. It is found in the nucleus. The protein resides in the nucleus speckle. Its subcellular location is the nuclear body. The protein localises to the stress granule. In terms of biological role, in unstressed cells, promotes SIAH1-mediated polyubiquitination and degradation of the serine/threonine-protein kinase HIPK2, probably by acting as a loading factor that potentiates complex formation between HIPK2 and ubiquitin ligase SIAH1. In response to DNA damage, localizes to the nucleus following phosphorylation by HIPK2 and modulates the expression of a subset of TP53/p53 target genes by binding to TP53 at target gene promoters. This limits the expression of a number of cell death-mediating TP53 target genes, reducing DNA damage-induced cell death. Enhances the binding of transcription factor TCF7L2/TCF4, a Wnt signaling pathway effector, to the promoters of target genes. Plays a role in stress granule formation. The sequence is that of DAZ-associated protein 2 from Macaca fascicularis (Crab-eating macaque).